The following is an 810-amino-acid chain: Transmembrane GTPase Marf (810 aa).

At 1–637 (MAAYLNRTIS…TTTPVEATPV (637 aa)) the chain is on the cytoplasmic side. The residue at position 8 (Thr-8) is a Phosphothreonine. Residues 13–40 (TGQTGPADDDRHASSTDTVDKSGPGSPL) are disordered. Over residues 20-32 (DDDRHASSTDTVD) the composition is skewed to basic and acidic residues. A Phosphoserine modification is found at Ser-38. The Dynamin-type G domain maps to 134 to 382 (QRDHMKVAFF…IRYFEFQDFE (249 aa)). Residues 144 to 151 (GRTSNGKS) form a G1 motif region. Position 147–152 (147–152 (SNGKSS)) interacts with GTP. A G2 motif region spans residues 170–171 (TT). The G3 motif stretch occupies residues 239 to 242 (DSPG). 298 to 301 (NRWD) is a binding site for GTP. The tract at residues 298–301 (NRWD) is G4 motif. Lys-327 is a region of interest (G5 motif). Ser-345 is a binding site for GTP. The stretch at 427–476 (RNLKQDQKNLLTERIQGTETQMMQVTREMKMKIHNMVEEVEEKVSKALNE) forms a coiled coil. Position 553 is a phosphothreonine (Thr-553). Position 554 is a phosphoserine (Ser-554). Thr-555 is subject to Phosphothreonine. The disordered stretch occupies residues 609–630 (GQPALVNRQSSIGHSVSTPTTT). A helical transmembrane segment spans residues 638 to 648 (CLLPAPVVAGI). The Mitochondrial intermembrane portion of the chain corresponds to 649 to 668 (TPEQLSLISRFAVSSIGSQG). Residues 669 to 689 (TVGGLVVAGVMLKTIGWRVLV) form a helical membrane-spanning segment. Topologically, residues 690–810 (GVGALYGCIY…IFEHNYISPQ (121 aa)) are cytoplasmic. Residues 759-806 (TATTDMNDELKTLDSQLNILEANQKQLKLLRNKANYIQNELDIFEHNY) are a coiled coil.

Belongs to the TRAFAC class dynamin-like GTPase superfamily. Dynamin/Fzo/YdjA family. Mitofusin subfamily. As to quaternary structure, interacts with Mul1. Ubiquitinated by park and Mul1. Ubiquitinated, probably by HUWE1, when dietary stearate (C18:0) levels are low; ubiquitination inhibits mitochondrial fusion. Widely expressed in embryos, accumulating in the mesoderm and endoderm during gut development. In the male germ line, it is expressed in spermatogonia, spermatocytes and early spermatids.

It localises to the mitochondrion outer membrane. The catalysed reaction is GTP + H2O = GDP + phosphate + H(+). Mitochondrial outer membrane GTPase that mediates mitochondrial clustering and fusion. Mitochondrial fusion is the physical merging of mitochondria that gives rise to mitochondrial networks, and this process is counterbalanced by mitochondrial fission which fragments networks. Promotes, but is not required for park recruitment to dysfunctional mitochondria. The polypeptide is Transmembrane GTPase Marf (Marf) (Drosophila melanogaster (Fruit fly)).